The sequence spans 481 residues: Phosphoglucosamine mutase (481 aa).

The active-site Phosphoserine intermediate is the Ser-128. 4 residues coordinate Mg(2+): Ser-128, Asp-269, Asp-271, and Asp-273. Phosphoserine is present on Ser-128.

This sequence belongs to the phosphohexose mutase family. It depends on Mg(2+) as a cofactor. Post-translationally, activated by phosphorylation.

It catalyses the reaction alpha-D-glucosamine 1-phosphate = D-glucosamine 6-phosphate. Catalyzes the conversion of glucosamine-6-phosphate to glucosamine-1-phosphate. This Synechocystis sp. (strain ATCC 27184 / PCC 6803 / Kazusa) protein is Phosphoglucosamine mutase.